A 331-amino-acid polypeptide reads, in one-letter code: Cytosolic 5'-nucleotidase 3A (331 aa).

Residue D83 is the Nucleophile of the active site. Residues D83 and D85 each coordinate Mg(2+). The active-site Proton donor is the D85. E130 is a binding site for CMP. The N(7)-methyl-GMP site is built by E130 and S151. Substrate-binding positions include 198–199 (SA) and K247. Residue D272 participates in Mg(2+) binding.

It belongs to the pyrimidine 5'-nucleotidase family.

The protein localises to the cytoplasm. It catalyses the reaction N(7)-methyl-GMP + H2O = N(7)-methylguanosine + phosphate. It carries out the reaction a ribonucleoside 5'-phosphate + H2O = a ribonucleoside + phosphate. In terms of biological role, nucleotidase which shows specific activity towards cytidine monophosphate (CMP) and 7-methylguanosine monophosphate (m(7)GMP). CMP seems to be the preferred substrate. This Gallus gallus (Chicken) protein is Cytosolic 5'-nucleotidase 3A (NT5C3A).